The primary structure comprises 488 residues: Inosine-5'-monophosphate dehydrogenase (488 aa).

2 CBS domains span residues 95–153 (VISN…SIKI) and 157–216 (MTKE…AKDE). NAD(+) is bound by residues D250 and 300–302 (GIG). Positions 302 and 304 each coordinate K(+). S305 is an IMP binding site. C307 lines the K(+) pocket. C307 serves as the catalytic Thioimidate intermediate. Residues 340–342 (DGG), 363–364 (GS), and 387–391 (YRGMG) each bind IMP. The Proton acceptor role is filled by R403. Residue E417 coordinates IMP. Residues 467-488 (AGLAESHPHDVQITKESPNYSF) are disordered. K(+) is bound by residues E471, S472, and H473.

The protein belongs to the IMPDH/GMPR family. As to quaternary structure, homotetramer. It depends on K(+) as a cofactor.

The enzyme catalyses IMP + NAD(+) + H2O = XMP + NADH + H(+). It functions in the pathway purine metabolism; XMP biosynthesis via de novo pathway; XMP from IMP: step 1/1. With respect to regulation, mycophenolic acid (MPA) is a non-competitive inhibitor that prevents formation of the closed enzyme conformation by binding to the same site as the amobile flap. In contrast, mizoribine monophosphate (MZP) is a competitive inhibitor that induces the closed conformation. MPA is a potent inhibitor of mammalian IMPDHs but a poor inhibitor of the bacterial enzymes. MZP is a more potent inhibitor of bacterial IMPDH. Functionally, catalyzes the conversion of inosine 5'-phosphate (IMP) to xanthosine 5'-phosphate (XMP), the first committed and rate-limiting step in the de novo synthesis of guanine nucleotides, and therefore plays an important role in the regulation of cell growth. The polypeptide is Inosine-5'-monophosphate dehydrogenase (Staphylococcus saprophyticus subsp. saprophyticus (strain ATCC 15305 / DSM 20229 / NCIMB 8711 / NCTC 7292 / S-41)).